The chain runs to 423 residues: 3-phosphoshikimate 1-carboxyvinyltransferase (423 aa).

Residues K28, S29, and R33 each coordinate 3-phosphoshikimate. Position 28 (K28) interacts with phosphoenolpyruvate. Positions 96 and 124 each coordinate phosphoenolpyruvate. S169, S170, Q171, S198, E312, and H339 together coordinate 3-phosphoshikimate. Q171 serves as a coordination point for phosphoenolpyruvate. The active-site Proton acceptor is the E312. Positions 343, 384, and 409 each coordinate phosphoenolpyruvate.

Belongs to the EPSP synthase family. As to quaternary structure, monomer.

It is found in the cytoplasm. The catalysed reaction is 3-phosphoshikimate + phosphoenolpyruvate = 5-O-(1-carboxyvinyl)-3-phosphoshikimate + phosphate. It functions in the pathway metabolic intermediate biosynthesis; chorismate biosynthesis; chorismate from D-erythrose 4-phosphate and phosphoenolpyruvate: step 6/7. Catalyzes the transfer of the enolpyruvyl moiety of phosphoenolpyruvate (PEP) to the 5-hydroxyl of shikimate-3-phosphate (S3P) to produce enolpyruvyl shikimate-3-phosphate and inorganic phosphate. The sequence is that of 3-phosphoshikimate 1-carboxyvinyltransferase from Acidothermus cellulolyticus (strain ATCC 43068 / DSM 8971 / 11B).